The sequence spans 238 residues: Accessory gene regulator A (238 aa).

One can recognise a Response regulatory domain in the interval 2-125; that stretch reads KIFICEDDPK…LRTRIIDCLE (124 aa). 4-aspartylphosphate is present on D59. Residues 143–238 form the HTH LytTR-type domain; the sequence is IELKRGSNSV…YASVRNVKKI (96 aa).

The protein localises to the cytoplasm. Functionally, required for high-level post-exponential phase expression of a series of secreted proteins. This chain is Accessory gene regulator A (agrA), found in Staphylococcus aureus (strain COL).